The chain runs to 273 residues: Bis(5'-nucleosyl)-tetraphosphatase, symmetrical (273 aa).

This sequence belongs to the Ap4A hydrolase family.

It carries out the reaction P(1),P(4)-bis(5'-adenosyl) tetraphosphate + H2O = 2 ADP + 2 H(+). Hydrolyzes diadenosine 5',5'''-P1,P4-tetraphosphate to yield ADP. The chain is Bis(5'-nucleosyl)-tetraphosphatase, symmetrical from Aeromonas salmonicida (strain A449).